A 195-amino-acid chain; its full sequence is Archaetidylinositol phosphate synthase (195 aa).

Transmembrane regions (helical) follow at residues 27–47 (IALP…AASA) and 54–74 (LITG…DGAV). Mg(2+) contacts are provided by aspartate 68, aspartate 71, aspartate 89, and aspartate 93. Aspartate 93 serves as the catalytic Proton acceptor. 2 consecutive transmembrane segments (helical) span residues 99–119 (IIII…LLAL) and 158–178 (LAGY…LAAL).

This sequence belongs to the CDP-alcohol phosphatidyltransferase class-I family. Mn(2+) is required as a cofactor. Requires Mg(2+) as cofactor.

The protein localises to the cell membrane. The enzyme catalyses CDP-2,3-bis-O-(phytanyl)-sn-glycerol + 1D-myo-inositol 3-phosphate = saturated 1-archaetidyl-1D-myo-inositol 3-phosphate + CMP + H(+). It participates in lipid metabolism; phospholipid metabolism. In terms of biological role, catalyzes the formation of archaetidylinositol phosphate (AIP) from CDP-archaeol (CDP-ArOH or CDP-2,3-bis-(O-phytanyl)-sn-glycerol) and 1L-myo-inositol 1-phosphate (IP or 1D-myo-inositol 3-phosphate). AIP is a precursor of archaetidyl-myo-inositol (AI), an ether-type inositol phospholipid ubiquitously distributed in archaea membranes and essential for glycolipid biosynthesis in archaea. The polypeptide is Archaetidylinositol phosphate synthase (Methanothermobacter thermautotrophicus (strain ATCC 29096 / DSM 1053 / JCM 10044 / NBRC 100330 / Delta H) (Methanobacterium thermoautotrophicum)).